A 545-amino-acid polypeptide reads, in one-letter code: Beta-sesquiphellandrene synthase (545 aa).

The Mg(2+) site is built by Asp299, Asp303, Asn443, Ser447, and Glu451. A DDXXD motif motif is present at residues 299 to 303; sequence DDIMD.

This sequence belongs to the terpene synthase family. Mg(2+) serves as cofactor. The cofactor is Mn(2+).

The protein resides in the cytoplasm. The catalysed reaction is (2E,6E)-farnesyl diphosphate = beta-sesquiphellandrene + diphosphate. The protein operates within secondary metabolite biosynthesis; terpenoid biosynthesis. Its function is as follows. Sesquiterpene synthase converting farnesyl diphosphate into beta-sesquiphellandrene and six minor products, zingiberene, 7-epi-sesquithujene, sesquisabinene A, (E)-alpha-bergamotene, (E)-beta-farnesene and beta-bisabolene. Can also accept geranyl diphosphate as substrate, producing nine monoterpenes, with myrcene and limonene as the major products. This chain is Beta-sesquiphellandrene synthase (TPS2), found in Sorghum bicolor (Sorghum).